Reading from the N-terminus, the 514-residue chain is Intracellular exo-alpha-L-arabinofuranosidase (514 aa).

The alpha-L-arabinofuranose site is built by Glu47 and Asn194. The active-site Proton donor/acceptor is Glu195. The alpha-L-arabinofuranose site is built by Tyr261, Glu317, and Gln366. The Nucleophile role is filled by Glu317.

The protein belongs to the glycosyl hydrolase 51 family. As to quaternary structure, homohexamer; trimer of dimers.

The protein localises to the cytoplasm. The catalysed reaction is Hydrolysis of terminal non-reducing alpha-L-arabinofuranoside residues in alpha-L-arabinosides.. It participates in glycan metabolism; L-arabinan degradation. In terms of biological role, involved in the degradation of arabinan and is a key enzyme in the complete degradation of the plant cell wall. Catalyzes the cleavage of terminal alpha-L-arabinofuranosyl residues in different hemicellulosic homopolysaccharides (branched and debranched arabinans) and heteropolysaccharides (arabinoxylans). This Bacteroides ovatus protein is Intracellular exo-alpha-L-arabinofuranosidase (asdII).